We begin with the raw amino-acid sequence, 100 residues long: Urease subunit gamma (100 aa).

It belongs to the urease gamma subunit family. Heterotrimer of UreA (gamma), UreB (beta) and UreC (alpha) subunits. Three heterotrimers associate to form the active enzyme.

The protein localises to the cytoplasm. The enzyme catalyses urea + 2 H2O + H(+) = hydrogencarbonate + 2 NH4(+). The protein operates within nitrogen metabolism; urea degradation; CO(2) and NH(3) from urea (urease route): step 1/1. The chain is Urease subunit gamma from Rhodopseudomonas palustris (strain BisB5).